A 284-amino-acid polypeptide reads, in one-letter code: Tropomyosin (284 aa).

The stretch at 1 to 284 (MDAIKKKMLM…DQALNELHNM (284 aa)) forms a coiled coil. 2 disordered regions span residues 106-134 (LNST…ENRQ) and 186-221 (AETK…EEAY). Basic and acidic residues-rich tracts occupy residues 112-134 (KLTD…ENRQ) and 186-198 (AETK…DELK).

Belongs to the tropomyosin family. In terms of assembly, homodimer.

Its function is as follows. Tropomyosin, in association with the troponin complex, plays a central role in the calcium dependent regulation of muscle contraction. This Branchiostoma belcheri (Amphioxus) protein is Tropomyosin (TPM).